Reading from the N-terminus, the 140-residue chain is Vesicle transport protein GOT1 (140 aa).

Helical transmembrane passes span 12-32 (IGLG…IFVF), 35-55 (GLIA…IGIN), 71-91 (ISFG…GLLL), and 96-116 (FLVL…RIPL).

The protein belongs to the GOT1 family. As to quaternary structure, homodimer. No interactions with STL1, STL2, CESA1, CESA3, CESA4, CESA6, CESA7 or CESA8.

The protein localises to the golgi apparatus membrane. Its function is as follows. May be involved in fusion of ER-derived transport vesicles with the Golgi complex. This is Vesicle transport protein GOT1 from Arabidopsis thaliana (Mouse-ear cress).